A 243-amino-acid chain; its full sequence is Interleukin-27 subunit alpha (243 aa).

The N-terminal stretch at 1–28 (MGQTAGDLGWRLSLLLLPLLLVQAGVWG) is a signal peptide.

Belongs to the IL-6 superfamily. Heterodimer with EBI3; not disulfide-linked. This heterodimer is known as interleukin IL-27. In terms of processing, O-glycosylated. In terms of tissue distribution, expressed in monocytes and in placenta.

It localises to the secreted. Associates with EBI3 to form the IL-27 interleukin, a heterodimeric cytokine which functions in innate immunity. IL-27 has pro- and anti-inflammatory properties, that can regulate T-helper cell development, suppress T-cell proliferation, stimulate cytotoxic T-cell activity, induce isotype switching in B-cells, and that has diverse effects on innate immune cells. Among its target cells are CD4 T-helper cells which can differentiate in type 1 effector cells (TH1), type 2 effector cells (TH2) and IL17 producing helper T-cells (TH17). It drives rapid clonal expansion of naive but not memory CD4 T-cells. It also strongly synergizes with IL-12 to trigger interferon-gamma/IFN-gamma production of naive CD4 T-cells, binds to the cytokine receptor WSX-1/TCCR which appears to be required but not sufficient for IL-27-mediated signal transduction. IL-27 potentiate the early phase of TH1 response and suppress TH2 and TH17 differentiation. It induces the differentiation of TH1 cells via two distinct pathways, p38 MAPK/TBX21- and ICAM1/ITGAL/ERK-dependent pathways. It also induces STAT1, STAT3, STAT4 and STAT5 phosphorylation and activates TBX21/T-Bet via STAT1 with resulting IL12RB2 up-regulation, an event crucial to TH1 cell commitment. It suppresses the expression of GATA3, the inhibitor TH1 cells development. In CD8 T-cells, it activates STATs as well as GZMB. IL-27 reveals to be a potent inhibitor of TH17 cell development and of IL-17 production. Indeed IL27 alone is also able to inhibit the production of IL17 by CD4 and CD8 T-cells. While IL-27 suppressed the development of pro-inflammatory Th17 cells via STAT1, it inhibits the development of anti-inflammatory inducible regulatory T-cells, iTreg, independently of STAT1. IL-27 also has an effect on cytokine production, it suppresses pro-inflammatory cytokine production such as IL2, IL4, IL5 and IL6 and activates suppressors of cytokine signaling such as SOCS1 and SOCS3. Apart from suppression of cytokine production, IL-27 also antagonizes the effects of some cytokines such as IL6 through direct effects on T-cells. Another important role of IL-27 is its antitumor activity as well as its antiangiogenic activity with activation of production of antiangiogenic chemokines such as IP-10/CXCL10 and MIG/CXCL9. In vein endothelial cells, it induces IRF1/interferon regulatory factor 1 and increase the expression of MHC class II transactivator/CIITA with resulting up-regulation of major histocompatibility complex class II. IL-27 also demonstrates antiviral activity with inhibitory properties on HIV-1 replication. In Homo sapiens (Human), this protein is Interleukin-27 subunit alpha (IL27).